Consider the following 634-residue polypeptide: UPF0313 protein PG_0934 (634 aa).

A Radical SAM core domain is found at 302–582; the sequence is AYEMIKHSVN…RQHMFFFWYK (281 aa). The [4Fe-4S] cluster site is built by cysteine 316, cysteine 320, and cysteine 323. Residues 607 to 634 are disordered; sequence DRTTSSRNDRHTPPSTQPRKSKSKSRHS. Positions 625–634 are enriched in basic residues; that stretch reads RKSKSKSRHS.

The protein belongs to the UPF0313 family. [4Fe-4S] cluster is required as a cofactor.

The polypeptide is UPF0313 protein PG_0934 (Porphyromonas gingivalis (strain ATCC BAA-308 / W83)).